The following is a 294-amino-acid chain: Methionine aminopeptidase (294 aa).

Substrate is bound at residue His-65. The a divalent metal cation site is built by Asp-85, Asp-96, and His-156. His-164 contacts substrate. The a divalent metal cation site is built by Glu-189 and Glu-279.

The protein belongs to the peptidase M24A family. Methionine aminopeptidase archaeal type 2 subfamily. In terms of assembly, monomer. It depends on Co(2+) as a cofactor. Zn(2+) is required as a cofactor. Mn(2+) serves as cofactor. Requires Fe(2+) as cofactor.

The catalysed reaction is Release of N-terminal amino acids, preferentially methionine, from peptides and arylamides.. Removes the N-terminal methionine from nascent proteins. The N-terminal methionine is often cleaved when the second residue in the primary sequence is small and uncharged (Met-Ala-, Cys, Gly, Pro, Ser, Thr, or Val). This Methanocaldococcus jannaschii (strain ATCC 43067 / DSM 2661 / JAL-1 / JCM 10045 / NBRC 100440) (Methanococcus jannaschii) protein is Methionine aminopeptidase.